The primary structure comprises 96 residues: Co-chaperonin GroES (96 aa).

It belongs to the GroES chaperonin family. As to quaternary structure, heptamer of 7 subunits arranged in a ring. Interacts with the chaperonin GroEL.

It localises to the cytoplasm. Together with the chaperonin GroEL, plays an essential role in assisting protein folding. The GroEL-GroES system forms a nano-cage that allows encapsulation of the non-native substrate proteins and provides a physical environment optimized to promote and accelerate protein folding. GroES binds to the apical surface of the GroEL ring, thereby capping the opening of the GroEL channel. This is Co-chaperonin GroES from Shewanella baltica (strain OS223).